The chain runs to 387 residues: Putative transposase y4pF/y4sB (387 aa).

It belongs to the transposase 20 family.

This Sinorhizobium fredii (strain NBRC 101917 / NGR234) protein is Putative transposase y4pF/y4sB.